Here is a 211-residue protein sequence, read N- to C-terminus: MSKVTYIIKASNDVLNEKTATILITIAKKDFITAAEVREVHPDLGNAVVNSNIGVLIKKGLVEKSGDGLIITGEAQDIISNAATLYAQENAPELLKKRATRKAREITSDMEEDKDLMLKLLDKNGFVLKKVEIYRSNYLAILEKRTNGIRNFEINNNGNMRIFGYKMMEHHIQKFTDIGMSCKIAKNGNVYLDIKRSAENIEAVITVASEL.

The H-T-H motif DNA-binding region spans 23–42 (LITIAKKDFITAAEVREVHP).

Required for the transcriptional activation of middle promoters. Middle promoters are characterized by the presence of the conserved sequence [AT]3TGCTTNA (MotA box). MotA binds directly to MotA boxes. This is Middle transcription regulatory protein motA (motA) from Enterobacteria phage T4 (Bacteriophage T4).